Consider the following 98-residue polypeptide: Large ribosomal subunit protein uL23 (98 aa).

It belongs to the universal ribosomal protein uL23 family. Part of the 50S ribosomal subunit. Contacts protein L29, and trigger factor when it is bound to the ribosome.

One of the early assembly proteins it binds 23S rRNA. One of the proteins that surrounds the polypeptide exit tunnel on the outside of the ribosome. Forms the main docking site for trigger factor binding to the ribosome. The sequence is that of Large ribosomal subunit protein uL23 from Cereibacter sphaeroides (strain ATCC 17029 / ATH 2.4.9) (Rhodobacter sphaeroides).